Consider the following 255-residue polypeptide: 3-deoxy-manno-octulosonate cytidylyltransferase (255 aa).

The protein belongs to the KdsB family.

Its subcellular location is the cytoplasm. It catalyses the reaction 3-deoxy-alpha-D-manno-oct-2-ulosonate + CTP = CMP-3-deoxy-beta-D-manno-octulosonate + diphosphate. The protein operates within nucleotide-sugar biosynthesis; CMP-3-deoxy-D-manno-octulosonate biosynthesis; CMP-3-deoxy-D-manno-octulosonate from 3-deoxy-D-manno-octulosonate and CTP: step 1/1. It functions in the pathway bacterial outer membrane biogenesis; lipopolysaccharide biosynthesis. In terms of biological role, activates KDO (a required 8-carbon sugar) for incorporation into bacterial lipopolysaccharide in Gram-negative bacteria. In Polaromonas sp. (strain JS666 / ATCC BAA-500), this protein is 3-deoxy-manno-octulosonate cytidylyltransferase.